Reading from the N-terminus, the 966-residue chain is Valine--tRNA ligase (966 aa).

A 'HIGH' region motif is present at residues 48–58 (PNITGGLHLGH). A coiled-coil region spans residues 348 to 368 (DYKDARKKIIEECKRLKILED). A 'KMSKS' region motif is present at residues 566–570 (KMSKS). ATP is bound at residue lysine 569. Residues 939 to 960 (FKKSQEKLNHYNKTKNKLLNQY) adopt a coiled-coil conformation.

Belongs to the class-I aminoacyl-tRNA synthetase family. ValS type 1 subfamily. In terms of assembly, monomer.

Its subcellular location is the cytoplasm. It catalyses the reaction tRNA(Val) + L-valine + ATP = L-valyl-tRNA(Val) + AMP + diphosphate. Catalyzes the attachment of valine to tRNA(Val). As ValRS can inadvertently accommodate and process structurally similar amino acids such as threonine, to avoid such errors, it has a 'posttransfer' editing activity that hydrolyzes mischarged Thr-tRNA(Val) in a tRNA-dependent manner. This is Valine--tRNA ligase from Blochmanniella floridana.